The following is a 525-amino-acid chain: Serine/threonine protein phosphatase 2A 55 kDa regulatory subunit B beta isoform (525 aa).

Residues 1–30 are disordered; it reads MDPSSKSPDDDDLRPEAEAARRPQPQPQPR. WD repeat units follow at residues 48 to 87 and 124 to 165; these read QEVDIISAIEFDKSGDHLATGDRGGRVVLFERTDSRDSAS and EIEE…VKRI. Residues 169–191 form a disordered region; it reads NLNTSQSSGNGTTSSSSSSSSRA. Over residues 171-189 the composition is skewed to low complexity; it reads NTSQSSGNGTTSSSSSSSS. WD repeat units lie at residues 244-282, 293-333, 352-390, and 495-525; these read AHDYHINSISNNSDGETYISADDLRINLWNLEISNQSFN, DLTE…LCDN, EIIASVSDIKFARDGRHILSRDYMTLKLWDINMDSGPVA, and DLSTKLLHLAWHPTENSIACAAANSLYMYYA.

This sequence belongs to the phosphatase 2A regulatory subunit B family. In terms of assembly, PP2A consists of a common heteromeric enzyme, composed of a catalytic subunit (subunits C), a constant regulatory subunit (subunit A), and a variety of regulatory subunits such as subunits B (the R2/B/PR55/B55, R3/B''/PR72/PR130/PR59 and R5/B'/B56 families).

The B regulatory subunit may modulate substrate selectivity and catalytic activity, and may also direct the localization of the catalytic enzyme to a particular subcellular compartment. This Oryza sativa subsp. japonica (Rice) protein is Serine/threonine protein phosphatase 2A 55 kDa regulatory subunit B beta isoform.